We begin with the raw amino-acid sequence, 204 residues long: Protein GrpE (204 aa).

The interval 1 to 52 (MSSKNNPESETKAKNKWEKVMEAEEEQEEGGGDGSQEMEPHREGLEFPSREK) is disordered. Basic and acidic residues-rich tracts occupy residues 7-22 (PESETKAKNKWEKVME) and 38-52 (MEPHREGLEFPSREK).

It belongs to the GrpE family. As to quaternary structure, homodimer.

Its subcellular location is the cytoplasm. Its function is as follows. Participates actively in the response to hyperosmotic and heat shock by preventing the aggregation of stress-denatured proteins, in association with DnaK and GrpE. It is the nucleotide exchange factor for DnaK and may function as a thermosensor. Unfolded proteins bind initially to DnaJ; upon interaction with the DnaJ-bound protein, DnaK hydrolyzes its bound ATP, resulting in the formation of a stable complex. GrpE releases ADP from DnaK; ATP binding to DnaK triggers the release of the substrate protein, thus completing the reaction cycle. Several rounds of ATP-dependent interactions between DnaJ, DnaK and GrpE are required for fully efficient folding. The chain is Protein GrpE from Coxiella burnetii (strain Dugway 5J108-111).